The chain runs to 356 residues: Alanine racemase (356 aa).

Lys34 serves as the catalytic Proton acceptor; specific for D-alanine. Lys34 is subject to N6-(pyridoxal phosphate)lysine. Arg129 is a binding site for substrate. Tyr253 (proton acceptor; specific for L-alanine) is an active-site residue. Met301 is a binding site for substrate.

This sequence belongs to the alanine racemase family. Pyridoxal 5'-phosphate serves as cofactor.

The enzyme catalyses L-alanine = D-alanine. Its pathway is amino-acid biosynthesis; D-alanine biosynthesis; D-alanine from L-alanine: step 1/1. In terms of biological role, catalyzes the interconversion of L-alanine and D-alanine. May also act on other amino acids. The sequence is that of Alanine racemase (alr) from Nitrosococcus oceani (strain ATCC 19707 / BCRC 17464 / JCM 30415 / NCIMB 11848 / C-107).